The primary structure comprises 332 residues: DNA-directed RNA polymerase subunit alpha (332 aa).

An alpha N-terminal domain (alpha-NTD) region spans residues 1–244 (MKKHAKVYYS…AHLNLLADVE (244 aa)). The tract at residues 259–332 (IKEEPIRRFS…NYKNENKGEN (74 aa)) is alpha C-terminal domain (alpha-CTD).

The protein belongs to the RNA polymerase alpha chain family. Homodimer. The RNAP catalytic core consists of 2 alpha, 1 beta, 1 beta' and 1 omega subunit. When a sigma factor is associated with the core the holoenzyme is formed, which can initiate transcription.

The catalysed reaction is RNA(n) + a ribonucleoside 5'-triphosphate = RNA(n+1) + diphosphate. Functionally, DNA-dependent RNA polymerase catalyzes the transcription of DNA into RNA using the four ribonucleoside triphosphates as substrates. This Mesomycoplasma hyopneumoniae (strain 232) (Mycoplasma hyopneumoniae) protein is DNA-directed RNA polymerase subunit alpha.